Reading from the N-terminus, the 440-residue chain is Chromosome partition protein MukF (440 aa).

The interval 208 to 236 (LSETSGTLRELQDTLEAAGDKLQANLLRI) is leucine-zipper.

It belongs to the MukF family. As to quaternary structure, interacts, and probably forms a ternary complex, with MukE and MukB via its C-terminal region. The complex formation is stimulated by calcium or magnesium. It is required for an interaction between MukE and MukB.

It localises to the cytoplasm. The protein localises to the nucleoid. Involved in chromosome condensation, segregation and cell cycle progression. May participate in facilitating chromosome segregation by condensation DNA from both sides of a centrally located replisome during cell division. Not required for mini-F plasmid partitioning. Probably acts via its interaction with MukB and MukE. Overexpression results in anucleate cells. It has a calcium binding activity. This chain is Chromosome partition protein MukF, found in Salmonella agona (strain SL483).